A 279-amino-acid polypeptide reads, in one-letter code: Aldo-keto reductase Mvan_2161 (279 aa).

Catalysis depends on tyrosine 54, which acts as the Proton donor. NADPH-binding residues include leucine 194, valine 196, isoleucine 232, arginine 234, serine 235, arginine 240, serine 243, asparagine 244, and arginine 270.

The protein belongs to the aldo/keto reductase family.

In Mycolicibacterium vanbaalenii (strain DSM 7251 / JCM 13017 / BCRC 16820 / KCTC 9966 / NRRL B-24157 / PYR-1) (Mycobacterium vanbaalenii), this protein is Aldo-keto reductase Mvan_2161.